A 71-amino-acid polypeptide reads, in one-letter code: Protein CYSTEINE-RICH TRANSMEMBRANE MODULE 6 (71 aa).

Over residues 1–12 (MSQYSQNQSSGA) the composition is skewed to polar residues. Residues 1-36 (MSQYSQNQSSGAYPTPPVSTGPYVAPPPLGYPTNDT) are disordered. Residues 14–30 (PTPPVSTGPYVAPPPLG) show a composition bias toward pro residues. The helical transmembrane segment at 48-64 (SKGDGFLKGCLAAMCCC) threads the bilayer.

The protein belongs to the CYSTM1 family. As to quaternary structure, homodimer and heterodimers. Interacts with CYSTM7 and WIH1/CYSTM13. As to expression, mostly expressed in roots, stems, rosette leaves and siliques and, to a lower extent, in flowers and cauline leaves.

The protein resides in the cell membrane. It localises to the cytoplasm. Its function is as follows. Involved in resistance to abiotic stress. This Arabidopsis thaliana (Mouse-ear cress) protein is Protein CYSTEINE-RICH TRANSMEMBRANE MODULE 6.